Here is a 280-residue protein sequence, read N- to C-terminus: Bis(5'-nucleosyl)-tetraphosphatase, symmetrical (280 aa).

It belongs to the Ap4A hydrolase family.

It catalyses the reaction P(1),P(4)-bis(5'-adenosyl) tetraphosphate + H2O = 2 ADP + 2 H(+). Functionally, hydrolyzes diadenosine 5',5'''-P1,P4-tetraphosphate to yield ADP. This Shigella flexneri serotype 5b (strain 8401) protein is Bis(5'-nucleosyl)-tetraphosphatase, symmetrical.